The following is a 205-amino-acid chain: Outer-membrane lipoprotein LolB (205 aa).

A signal peptide spans methionine 1–glycine 17. A lipid anchor (N-palmitoyl cysteine) is attached at cysteine 18. Cysteine 18 is lipidated: S-diacylglycerol cysteine.

This sequence belongs to the LolB family. As to quaternary structure, monomer.

It is found in the cell outer membrane. Its function is as follows. Plays a critical role in the incorporation of lipoproteins in the outer membrane after they are released by the LolA protein. In Pseudomonas putida (strain ATCC 700007 / DSM 6899 / JCM 31910 / BCRC 17059 / LMG 24140 / F1), this protein is Outer-membrane lipoprotein LolB.